The chain runs to 101 residues: Protein Tat (101 aa).

The tract at residues 1 to 20 (MDPVDPNIEPWNQPGSQPKT) is disordered. An interaction with human CREBBP region spans residues 1-24 (MDPVDPNIEPWNQPGSQPKTACNQ). A transactivation region spans residues 1–48 (MDPVDPNIEPWNQPGSQPKTACNQCYCKRCCYHCQICFLKKGLGISNG). Residues C22, C25, and C27 each coordinate Zn(2+). The interval 22 to 37 (CNQCYCKRCCYHCQIC) is cysteine-rich. N6-acetyllysine; by host PCAF is present on K28. C30, H33, C34, and C37 together coordinate Zn(2+). Positions 38 to 48 (FLKKGLGISNG) are core. Positions 45 to 101 (ISNGRKKRRPRRTTPYNSENHQDPLRKQPLSQPRGEQTDPKESKKKVESKTKTDQFD) are disordered. The Nuclear localization signal, RNA-binding (TAR), and protein transduction signature appears at 49-57 (RKKRRPRRT). The interaction with the host capping enzyme RNGTT stretch occupies residues 49–86 (RKKRRPRRTTPYNSENHQDPLRKQPLSQPRGEQTDPKE). K50 and K51 each carry N6-acetyllysine; by host EP300 and GCN5L2. R52 and R53 each carry asymmetric dimethylarginine; by host PRMT6. A Glycyl lysine isopeptide (Lys-Gly) (interchain with G-Cter in ubiquitin) cross-link involves residue K71. Basic and acidic residues predominate over residues 80-101 (EQTDPKESKKKVESKTKTDQFD).

It belongs to the lentiviruses Tat family. As to quaternary structure, interacts with host CCNT1. Associates with the P-TEFb complex composed at least of Tat, P-TEFb (CDK9 and CCNT1), TAR RNA, RNA Pol II. Recruits the HATs CREBBP, TAF1/TFIID, EP300, PCAF and GCN5L2. Interacts with host KAT5/Tip60; this interaction targets the latter to degradation. Interacts with the host deacetylase SIRT1. Interacts with host capping enzyme RNGTT; this interaction stimulates RNGTT. Binds to host KDR, and to the host integrins ITGAV/ITGB3 and ITGA5/ITGB1. Interacts with host KPNB1/importin beta-1 without previous binding to KPNA1/importin alpha-1. Interacts with EIF2AK2. Interacts with host nucleosome assembly protein NAP1L1; this interaction may be required for the transport of Tat within the nucleus, since the two proteins interact at the nuclear rim. Interacts with host C1QBP/SF2P32; this interaction involves lysine-acetylated Tat. Interacts with the host chemokine receptors CCR2, CCR3 and CXCR4. Interacts with host DPP4/CD26; this interaction may trigger an anti-proliferative effect. Interacts with host LDLR. Interacts with the host extracellular matrix metalloproteinase MMP1. Interacts with host PRMT6; this interaction mediates Tat's methylation. Interacts with, and is ubiquitinated by MDM2/Hdm2. Interacts with host PSMC3 and HTATIP2. Interacts with STAB1; this interaction may overcome SATB1-mediated repression of IL2 and IL2RA (interleukin) in T cells by binding to the same domain than HDAC1. Interacts (when acetylated) with human CDK13, thereby increasing HIV-1 mRNA splicing and promoting the production of the doubly spliced HIV-1 protein Nef. Interacts with host TBP; this interaction modulates the activity of transcriptional pre-initiation complex. Interacts with host RELA. Interacts with host PLSCR1; this interaction negatively regulates Tat transactivation activity by altering its subcellular distribution. Post-translationally, asymmetrical arginine methylation by host PRMT6 seems to diminish the transactivation capacity of Tat and affects the interaction with host CCNT1. Acetylation by EP300, CREBBP, GCN5L2/GCN5 and PCAF regulates the transactivation activity of Tat. EP300-mediated acetylation of Lys-50 promotes dissociation of Tat from the TAR RNA through the competitive binding to PCAF's bromodomain. In addition, the non-acetylated Tat's N-terminus can also interact with PCAF. PCAF-mediated acetylation of Lys-28 enhances Tat's binding to CCNT1. Lys-50 is deacetylated by SIRT1. In terms of processing, polyubiquitination by host MDM2 does not target Tat to degradation, but activates its transactivation function and fosters interaction with CCNT1 and TAR RNA. Post-translationally, phosphorylated by EIF2AK2 on serine and threonine residues adjacent to the basic region important for TAR RNA binding and function. Phosphorylation of Tat by EIF2AK2 is dependent on the prior activation of EIF2AK2 by dsRNA.

The protein resides in the host nucleus. Its subcellular location is the host nucleolus. It is found in the host cytoplasm. The protein localises to the secreted. In terms of biological role, transcriptional activator that increases RNA Pol II processivity, thereby increasing the level of full-length viral transcripts. Recognizes a hairpin structure at the 5'-LTR of the nascent viral mRNAs referred to as the transactivation responsive RNA element (TAR) and recruits the cyclin T1-CDK9 complex (P-TEFb complex) that will in turn hyperphosphorylate the RNA polymerase II to allow efficient elongation. The CDK9 component of P-TEFb and other Tat-activated kinases hyperphosphorylate the C-terminus of RNA Pol II that becomes stabilized and much more processive. Other factors such as HTATSF1/Tat-SF1, SUPT5H/SPT5, and HTATIP2 are also important for Tat's function. Besides its effect on RNA Pol II processivity, Tat induces chromatin remodeling of proviral genes by recruiting the histone acetyltransferases (HATs) CREBBP, EP300 and PCAF to the chromatin. This also contributes to the increase in proviral transcription rate, especially when the provirus integrates in transcriptionally silent region of the host genome. To ensure maximal activation of the LTR, Tat mediates nuclear translocation of NF-kappa-B by interacting with host RELA. Through its interaction with host TBP, Tat may also modulate transcription initiation. Tat can reactivate a latently infected cell by penetrating in it and transactivating its LTR promoter. In the cytoplasm, Tat is thought to act as a translational activator of HIV-1 mRNAs. Functionally, extracellular circulating Tat can be endocytosed by surrounding uninfected cells via the binding to several surface receptors such as CD26, CXCR4, heparan sulfate proteoglycans (HSPG) or LDLR. Neurons are rarely infected, but they internalize Tat via their LDLR. Through its interaction with nuclear HATs, Tat is potentially able to control the acetylation-dependent cellular gene expression. Modulates the expression of many cellular genes involved in cell survival, proliferation or in coding for cytokines or cytokine receptors. Tat plays a role in T-cell and neurons apoptosis. Tat induced neurotoxicity and apoptosis probably contribute to neuroAIDS. Circulating Tat also acts as a chemokine-like and/or growth factor-like molecule that binds to specific receptors on the surface of the cells, affecting many cellular pathways. In the vascular system, Tat binds to ITGAV/ITGB3 and ITGA5/ITGB1 integrins dimers at the surface of endothelial cells and competes with bFGF for heparin-binding sites, leading to an excess of soluble bFGF. This is Protein Tat from Homo sapiens (Human).